Consider the following 530-residue polypeptide: Probable phosphoacetylglucosamine mutase (530 aa).

The active-site Phosphoserine intermediate is the S62. 4 residues coordinate Mg(2+): S62, D278, D280, and D282. Substrate contacts are provided by residues 369–371 (EPN), 481–485 (RPSGT), and R490.

It belongs to the phosphohexose mutase family. Requires Mg(2+) as cofactor.

The enzyme catalyses N-acetyl-alpha-D-glucosamine 1-phosphate = N-acetyl-D-glucosamine 6-phosphate. The protein operates within nucleotide-sugar biosynthesis; UDP-N-acetyl-alpha-D-glucosamine biosynthesis; N-acetyl-alpha-D-glucosamine 1-phosphate from alpha-D-glucosamine 6-phosphate (route I): step 2/2. Its function is as follows. Catalyzes the conversion of GlcNAc-6-P into GlcNAc-1-P during the synthesis of uridine diphosphate/UDP-GlcNAc, which is a biosynthetic precursor of chitin and also supplies the amino sugars for N-linked oligosaccharides of glycoproteins. The protein is Probable phosphoacetylglucosamine mutase of Encephalitozoon cuniculi (strain GB-M1) (Microsporidian parasite).